Consider the following 398-residue polypeptide: 8-amino-7-oxononanoate synthase (398 aa).

Residue Arg-23 participates in substrate binding. 110–111 (GY) contributes to the pyridoxal 5'-phosphate binding site. Residue His-135 participates in substrate binding. Residues Ser-181, His-209, and Thr-238 each contribute to the pyridoxal 5'-phosphate site. Position 241 is an N6-(pyridoxal phosphate)lysine (Lys-241). Residue Thr-355 participates in substrate binding.

This sequence belongs to the class-II pyridoxal-phosphate-dependent aminotransferase family. BioF subfamily. Homodimer. Pyridoxal 5'-phosphate is required as a cofactor.

The catalysed reaction is 6-carboxyhexanoyl-[ACP] + L-alanine + H(+) = (8S)-8-amino-7-oxononanoate + holo-[ACP] + CO2. Its pathway is cofactor biosynthesis; biotin biosynthesis. Catalyzes the decarboxylative condensation of pimeloyl-[acyl-carrier protein] and L-alanine to produce 8-amino-7-oxononanoate (AON), [acyl-carrier protein], and carbon dioxide. The polypeptide is 8-amino-7-oxononanoate synthase (Cellvibrio japonicus (strain Ueda107) (Pseudomonas fluorescens subsp. cellulosa)).